Reading from the N-terminus, the 343-residue chain is MAVHACGAAAAVVALLSAAIALQWSPLYAVLQRALSLHTAHATKDMENLFQLVRNIVPALTSKKHKGQDGRIGIVGGCQEYTGAPYFAGISALKVGADLTHVFCAREAAPVIKSYSPELIVHPVLDSSNAVEEVEKWLPRLHALVVGPGLGRDDLLLNNVRGILESTKARDIPVVIDADGLWLVAQQPALIHSYHKAILTPNHVEFSRLWEAVLSSPMDSNDLKGSTLKLSQALGNITVVQKGEQDLISNGQQVLVCNQEGSSRRCGGQGDLLSGSLGVMVHWALRAGPEKTNGSSPLLVAAWGACTLTRECNRQAFQKYGRSTTTTDMITEVGTAFSRLFTT.

A mitochondrion-targeting transit peptide spans 1 to 42 (MAVHACGAAAAVVALLSAAIALQWSPLYAVLQRALSLHTAHA). One can recognise a YjeF C-terminal domain in the interval 49 to 340 (LFQLVRNIVP…TEVGTAFSRL (292 aa)). Position 63 is an N6-acetyllysine (Lys63). The residue at position 81 (Tyr81) is a Phosphotyrosine. (6S)-NADPHX contacts are provided by residues Gly149 and 202–208 (NHVEFSR). Residue Ser216 is modified to Phosphoserine. Residues 242-246 (KGEQD) and 261-270 (GSSRRCGGQG) each bind ATP. Residue Asp271 coordinates (6S)-NADPHX.

It belongs to the NnrD/CARKD family. The cofactor is Mg(2+).

The protein resides in the mitochondrion. The catalysed reaction is (6S)-NADHX + ATP = ADP + phosphate + NADH + H(+). It catalyses the reaction (6S)-NADPHX + ATP = ADP + phosphate + NADPH + H(+). In terms of biological role, catalyzes the dehydration of the S-form of NAD(P)HX at the expense of ATP, which is converted to ADP. Together with NAD(P)HX epimerase, which catalyzes the epimerization of the S- and R-forms, the enzyme allows the repair of both epimers of NAD(P)HX, a damaged form of NAD(P)H that is a result of enzymatic or heat-dependent hydration. This Mus musculus (Mouse) protein is ATP-dependent (S)-NAD(P)H-hydrate dehydratase.